The sequence spans 523 residues: 3-hydroxybenzoate--CoA/4-hydroxybenzoate--CoA ligase (523 aa).

Belongs to the ATP-dependent AMP-binding enzyme family. Benzoate-CoA ligase subfamily.

It catalyses the reaction 4-hydroxybenzoate + ATP + CoA = 4-hydroxybenzoyl-CoA + AMP + diphosphate. The enzyme catalyses 3-hydroxybenzoate + ATP + CoA = 3-hydroxybenzoyl-CoA + AMP + diphosphate. Functionally, catalyzes the ligation of 3-hydroxybenzoate or 4-hydroxybenzoate and CoA at the expense of ATP. The enzyme shows low activity towards benzoate, 4-aminobenzoate, 3-aminobenzoate, 3-fluorobenzoate, 4-fluorobenzoate, 3-chlorobenzoate, and 4-chlorobenzoate. There is no activity with 3,4-dihydroxybenzoate, 2,3-dihydroxybenzoate, and 2-hydroxybenzoate as substrates. This Thauera aromatica protein is 3-hydroxybenzoate--CoA/4-hydroxybenzoate--CoA ligase (hcl).